Consider the following 457-residue polypeptide: NADH-quinone oxidoreductase subunit N (457 aa).

14 helical membrane-spanning segments follow: residues 2–22 (NAIILISVLGILSMMSEFIGL), 25–45 (LIYPIILISLIGILGYNACTF), 60–80 (NYSVAFGSLLITITLFWFILF), 92–112 (GDHYALILFSTVGGLVLVSFS), 114–134 (MSMLFLGVEILSIPLYILAGS), 149–169 (FILGSFATGIMLLGIALIYGA), 188–208 (FFIGITLLSIAFAFKVSAVPF), 222–242 (FITAFMSTFVKVAAFGAFYLM), 253–273 (YLSHTLIGLSALTIVVGNIAA), 283–303 (LAFSGVSQAGYMLMVFPILTI), 310–330 (FVYLAGYAIANLIAIYIVQVV), 353–373 (AFVLSLSLISLAGIPPAAGFF), 382–402 (VIHAGNIYLVLIAILGSLISV), and 431–451 (VILAIMSALVVLIGLFPDILL).

Belongs to the complex I subunit 2 family. NDH-1 is composed of 14 different subunits. Subunits NuoA, H, J, K, L, M, N constitute the membrane sector of the complex.

It is found in the cell inner membrane. It carries out the reaction a quinone + NADH + 5 H(+)(in) = a quinol + NAD(+) + 4 H(+)(out). Its function is as follows. NDH-1 shuttles electrons from NADH, via FMN and iron-sulfur (Fe-S) centers, to quinones in the respiratory chain. The immediate electron acceptor for the enzyme in this species is believed to be a menaquinone. Couples the redox reaction to proton translocation (for every two electrons transferred, four hydrogen ions are translocated across the cytoplasmic membrane), and thus conserves the redox energy in a proton gradient. The sequence is that of NADH-quinone oxidoreductase subunit N from Cytophaga hutchinsonii (strain ATCC 33406 / DSM 1761 / CIP 103989 / NBRC 15051 / NCIMB 9469 / D465).